The primary structure comprises 469 residues: MDLFISSQLLLLLVFCLFLFWNFKPSSQNKLPPGKTGWPIIGETLEFISCGQKGNPEKFVTQRMNKYSPDVFTTSLAGEKMVVFCGASGNKFIFSNENKLVVSWWPPAISKILTATIPSVEKSKALRSLIVEFLKPEALHKFISVMDRTTRQHFEDKWNGSTEVKAFAMSESLTFELACWLLFSINDPVQVQKLSHLFEKVKAGLLSLPLNFPGTAFNRGIKAANLIRKELSVVIKQRRSDKLQTRKDLLSHVMLSNGEGEKFFSEMDIADVVLNLLIASHDTTSSAMGSVVYFLADHPHIYAKVLTEQMEIAKSKGAEELLSWEDIKRMKYSRNVINEAMRLVPPSQGGFKVVTSKFSYANFIIPKGWKIFWSVYSTHKDPKYFKNPEEFDPSRFEGDGPMPFTFIPFGGGPRMCPGSEFARLEVLIFMHHLVTNFKWEKVFPNEKIIYTPFPFPENGLPIRLSPCTL.

Residues 3–23 (LFISSQLLLLLVFCLFLFWNF) form a helical membrane-spanning segment. Residue C416 coordinates heme.

It belongs to the cytochrome P450 family. Heme is required as a cofactor. In terms of tissue distribution, accumulates ubiquitously in all organs of plants, including roots, stems and leaves.

It is found in the membrane. The enzyme catalyses (20S)-protopanaxadiol + reduced [NADPH--hemoprotein reductase] + O2 = (20S)-protopanaxatriol + oxidized [NADPH--hemoprotein reductase] + H2O + H(+). Its pathway is secondary metabolite biosynthesis; terpenoid biosynthesis. With respect to regulation, activated by N,N'-dicyclohexylcarbodiimide (DCCD) thus leading to increased ginsenosides accumulation. Functionally, component of the dammarane-type triterpene saponins (e.g. PPT-type ginsenosides or panaxosides) biosynthetic pathway. Catalyzes the formation of protopanaxatriol from protopanaxadiol during ginsenoside biosynthesis, a class of tetracyclic triterpenoid saponins. The protein is Protopanaxadiol 6-hydroxylase of Panax ginseng (Korean ginseng).